Here is a 144-residue protein sequence, read N- to C-terminus: Vasopressin-neurophysin 2-copeptin (144 aa).

Cysteines 1 and 6 form a disulfide. G9 is modified (glycine amide). Disulfide bonds link C22–C66, C25–C39, C33–C56, C40–C46, C73–C85, C79–C97, and C86–C91. The N-linked (GlcNAc...) asparagine glycan is linked to N112.

The protein belongs to the vasopressin/oxytocin family. As to quaternary structure, interacts with vasopressin receptors V1bR/AVPR1B (Ki=85 pM), V1aR/AVPR1A (Ki=0.6 nM) and V2R/AVPR2 (Ki=4.9 nM). Interacts with oxytocin receptor (OXTR) (Ki=110 nM).

It localises to the secreted. Its function is as follows. Neurophysin 2 specifically binds vasopressin. Functionally, vasopressin has a direct antidiuretic action on the kidney, it also causes vasoconstriction of the peripheral vessels. Acts by binding to vasopressin receptors (V1bR/AVPR1B, V1aR/AVPR1A, and V2R/AVPR2). The protein is Vasopressin-neurophysin 2-copeptin (AVP) of Cavia porcellus (Guinea pig).